The primary structure comprises 342 residues: Ribosomal RNA small subunit methyltransferase C (342 aa).

Belongs to the methyltransferase superfamily. RsmC family. Monomer.

It localises to the cytoplasm. The catalysed reaction is guanosine(1207) in 16S rRNA + S-adenosyl-L-methionine = N(2)-methylguanosine(1207) in 16S rRNA + S-adenosyl-L-homocysteine + H(+). Functionally, specifically methylates the guanine in position 1207 of 16S rRNA in the 30S particle. The protein is Ribosomal RNA small subunit methyltransferase C of Citrobacter koseri (strain ATCC BAA-895 / CDC 4225-83 / SGSC4696).